A 235-amino-acid chain; its full sequence is Segregation and condensation protein A (235 aa).

This sequence belongs to the ScpA family. Component of a cohesin-like complex composed of ScpA, ScpB and the Smc homodimer, in which ScpA and ScpB bind to the head domain of Smc. The presence of the three proteins is required for the association of the complex with DNA.

Its subcellular location is the cytoplasm. Functionally, participates in chromosomal partition during cell division. May act via the formation of a condensin-like complex containing Smc and ScpB that pull DNA away from mid-cell into both cell halves. The chain is Segregation and condensation protein A from Streptococcus agalactiae serotype III (strain NEM316).